A 414-amino-acid chain; its full sequence is MSERVYATYWMETGGDPARTAEVIAGEQSSGTFVALATETAELKERSGARVERLDILDTADIPSLPGGMASDRYTRAILELSWPVENFGPSLPNLMSTIAGNLFELHQVSGLRLIDLKLPPSFTNAFAGPAFGIAGTRKLAGVAQGPIIGTIIKPSIGLTPEETAQQVRELIAGDIDFIKDDELQADGARCPFEARVKAVMRVVNDAADRRGRKVMVAFNITGDLDEMRRRHDLVLAEGGTCVMVCLNSIGLVGVREIRRHTQLPIHGHRAGWGYLYRCPSLGWDYAPWQQLWRLAGVDHLHVNGLDNKFSEANASVIAAARAVLSPLNHAAPMGAMPVFSSGQTGRQAAETYAAIGCADLIHTAGGGIFGHPAGVPAGVEALRAAWRAAMAGASLEDEATRSPALRSALGFWR.

Mg(2+) contacts are provided by Lys180, Asp182, and Glu183. Lys180 carries the N6-carboxylysine modification.

Belongs to the RuBisCO large chain family. It depends on Mg(2+) as a cofactor.

It catalyses the reaction 3-oxoisoapionate 4-phosphate + H2O = (2R)-3-phosphoglycerate + glycolate + H(+). Its pathway is carbohydrate metabolism. Involved in catabolism of D-apiose. Catalyzes the conversion of 3-oxo-isoapionate 4-phosphate to 3-phosphoglycerate and glycolate. The protein is 3-oxo-isoapionate-4-phosphate transcarboxylase/hydrolase of Xanthobacter autotrophicus (strain ATCC BAA-1158 / Py2).